The chain runs to 218 residues: Probable transaldolase (218 aa).

The active-site Schiff-base intermediate with substrate is lysine 87.

The protein belongs to the transaldolase family. Type 3B subfamily.

It localises to the cytoplasm. It catalyses the reaction D-sedoheptulose 7-phosphate + D-glyceraldehyde 3-phosphate = D-erythrose 4-phosphate + beta-D-fructose 6-phosphate. Its pathway is carbohydrate degradation; pentose phosphate pathway; D-glyceraldehyde 3-phosphate and beta-D-fructose 6-phosphate from D-ribose 5-phosphate and D-xylulose 5-phosphate (non-oxidative stage): step 2/3. Its function is as follows. Transaldolase is important for the balance of metabolites in the pentose-phosphate pathway. This Bacteroides fragilis (strain YCH46) protein is Probable transaldolase.